The sequence spans 485 residues: Bcl-2-like protein 13 (485 aa).

Residues E14–K30 carry the BH4 motif. S38 is subject to Phosphoserine. A BH3 motif is present at residues M100 to K116. Residues A147 to L157 carry the BH1 motif. The BH2 signature appears at Y193 to L206. The interval A218–Q248 is disordered. Polar residues predominate over residues S229–Q248. Residues S246 to L256 form an A repeat. Residues S259, S261, S303, S326, S371, S375, S410, S420, S426, S429, and S444 each carry the phosphoserine modification. An A; approximate repeat occupies S261–L271. A disordered region spans residues E418–P451. Residues L425–S441 form a B repeat. A B; approximate repeat occupies L443–S459. A helical membrane pass occupies residues I460 to L480.

This sequence belongs to the Bcl-2 family. As to quaternary structure, monomer. As to expression, ubiquitous, with the highest levels of expression in heart, placenta and pancreas.

The protein resides in the mitochondrion membrane. Its subcellular location is the nucleus. Functionally, may promote the activation of caspase-3 and apoptosis. In Homo sapiens (Human), this protein is Bcl-2-like protein 13 (BCL2L13).